Consider the following 293-residue polypeptide: Neugrin (293 aa).

A signal peptide spans 1-18; it reads MALSLSLFLGGRVRTSLA. A Phosphoserine modification is found at Ser-41. Disordered regions lie at residues 177–210 and 224–254; these read DEVS…EGRD and TTAL…TLPS. A glycan (N-linked (GlcNAc...) asparagine) is linked at Asn-185. The span at 198–210 shows a compositional bias: basic and acidic residues; the sequence is HSTDAQKKREGRD.

Belongs to the neugrin family. In terms of assembly, forms a regulatory protein-RNA complex, consisting of RCC1L, NGRN, RPUSD3, RPUSD4, TRUB2, FASTKD2 and 16S mt-rRNA. Interacts with 16S mt-rRNA; this interaction is direct. As to expression, expressed in heart, brain, liver and kidney. In brain, mainly expressed in neurons rather than glial cells.

The protein localises to the nucleus. The protein resides in the secreted. It is found in the mitochondrion membrane. Plays an essential role in mitochondrial ribosome biogenesis. As a component of a functional protein-RNA module, consisting of RCC1L, NGRN, RPUSD3, RPUSD4, TRUB2, FASTKD2 and 16S mitochondrial ribosomal RNA (16S mt-rRNA), controls 16S mt-rRNA abundance and is required for intra-mitochondrial translation of core subunits of the oxidative phosphorylation system. This Mus musculus (Mouse) protein is Neugrin (Ngrn).